The sequence spans 944 residues: Isoleucine--tRNA ligase (944 aa).

Positions 58-68 (PYANGQIHIGH) match the 'HIGH' region motif. Residue glutamate 568 participates in L-isoleucyl-5'-AMP binding. Residues 609–613 (KMSKS) carry the 'KMSKS' region motif. Lysine 612 contributes to the ATP binding site. Zn(2+)-binding residues include cysteine 907, cysteine 910, cysteine 927, and cysteine 930.

This sequence belongs to the class-I aminoacyl-tRNA synthetase family. IleS type 1 subfamily. Monomer. The cofactor is Zn(2+).

Its subcellular location is the cytoplasm. The enzyme catalyses tRNA(Ile) + L-isoleucine + ATP = L-isoleucyl-tRNA(Ile) + AMP + diphosphate. In terms of biological role, catalyzes the attachment of isoleucine to tRNA(Ile). As IleRS can inadvertently accommodate and process structurally similar amino acids such as valine, to avoid such errors it has two additional distinct tRNA(Ile)-dependent editing activities. One activity is designated as 'pretransfer' editing and involves the hydrolysis of activated Val-AMP. The other activity is designated 'posttransfer' editing and involves deacylation of mischarged Val-tRNA(Ile). In Idiomarina loihiensis (strain ATCC BAA-735 / DSM 15497 / L2-TR), this protein is Isoleucine--tRNA ligase.